Here is a 268-residue protein sequence, read N- to C-terminus: Indole-3-glycerol phosphate synthase (268 aa).

This sequence belongs to the TrpC family.

It catalyses the reaction 1-(2-carboxyphenylamino)-1-deoxy-D-ribulose 5-phosphate + H(+) = (1S,2R)-1-C-(indol-3-yl)glycerol 3-phosphate + CO2 + H2O. It functions in the pathway amino-acid biosynthesis; L-tryptophan biosynthesis; L-tryptophan from chorismate: step 4/5. The sequence is that of Indole-3-glycerol phosphate synthase from Acinetobacter baumannii (strain ACICU).